Consider the following 299-residue polypeptide: HTH-type transcriptional regulator CynR (299 aa).

An HTH lysR-type domain is found at 1–58; the sequence is MLSRHINYFLAVAEHGSFTRAASALHVSQPALSQQIRQLEESLGVPLFDRSGRTIRLT. A DNA-binding region (H-T-H motif) is located at residues 18-37; the sequence is FTRAASALHVSQPALSQQIR.

It belongs to the LysR transcriptional regulatory family.

The protein resides in the cytoplasm. Functionally, positively regulates the cynTSX operon, and negatively regulates its own transcription. Binds specifically to the cynR-cynTSX intergenic region. In Escherichia coli (strain K12), this protein is HTH-type transcriptional regulator CynR (cynR).